A 93-amino-acid chain; its full sequence is Small ribosomal subunit protein uS15 (93 aa).

The protein belongs to the universal ribosomal protein uS15 family. Part of the 30S ribosomal subunit. Forms a bridge to the 50S subunit in the 70S ribosome, contacting the 23S rRNA.

One of the primary rRNA binding proteins, it binds directly to 16S rRNA where it helps nucleate assembly of the platform of the 30S subunit by binding and bridging several RNA helices of the 16S rRNA. Functionally, forms an intersubunit bridge (bridge B4) with the 23S rRNA of the 50S subunit in the ribosome. This Ehrlichia canis (strain Jake) protein is Small ribosomal subunit protein uS15.